Consider the following 226-residue polypeptide: Orotate phosphoribosyltransferase (226 aa).

5-phospho-alpha-D-ribose 1-diphosphate contacts are provided by residues arginine 107, lysine 108, lysine 111, and 133 to 141 (EDLTTDGGS). Residue threonine 137 participates in orotate binding.

Belongs to the purine/pyrimidine phosphoribosyltransferase family. PyrE subfamily. In terms of assembly, homodimer. It depends on Mg(2+) as a cofactor.

It carries out the reaction orotidine 5'-phosphate + diphosphate = orotate + 5-phospho-alpha-D-ribose 1-diphosphate. It functions in the pathway pyrimidine metabolism; UMP biosynthesis via de novo pathway; UMP from orotate: step 1/2. Its function is as follows. Catalyzes the transfer of a ribosyl phosphate group from 5-phosphoribose 1-diphosphate to orotate, leading to the formation of orotidine monophosphate (OMP). In Ruegeria sp. (strain TM1040) (Silicibacter sp.), this protein is Orotate phosphoribosyltransferase.